A 497-amino-acid polypeptide reads, in one-letter code: Glutamate--tRNA ligase (497 aa).

The 'HIGH' region motif lies at 13-23 (PSPTGDPHVGT). The short motif at 253–257 (KISKR) is the 'KMSKS' region element. Lysine 256 contributes to the ATP binding site.

This sequence belongs to the class-I aminoacyl-tRNA synthetase family. Glutamate--tRNA ligase type 1 subfamily. In terms of assembly, monomer.

It is found in the cytoplasm. The enzyme catalyses tRNA(Glu) + L-glutamate + ATP = L-glutamyl-tRNA(Glu) + AMP + diphosphate. Functionally, catalyzes the attachment of glutamate to tRNA(Glu) in a two-step reaction: glutamate is first activated by ATP to form Glu-AMP and then transferred to the acceptor end of tRNA(Glu). The chain is Glutamate--tRNA ligase from Cutibacterium acnes (strain DSM 16379 / KPA171202) (Propionibacterium acnes).